Here is a 313-residue protein sequence, read N- to C-terminus: Protein phosphatase PTC7 homolog fig (313 aa).

The PPM-type phosphatase domain maps to Lys-47–Leu-307. The Mn(2+) site is built by Asp-83, Gly-84, and Asp-229.

The protein belongs to the PP2C family. Mg(2+) is required as a cofactor. Mn(2+) serves as cofactor.

The catalysed reaction is O-phospho-L-seryl-[protein] + H2O = L-seryl-[protein] + phosphate. It carries out the reaction O-phospho-L-threonyl-[protein] + H2O = L-threonyl-[protein] + phosphate. The polypeptide is Protein phosphatase PTC7 homolog fig (Drosophila virilis (Fruit fly)).